A 261-amino-acid chain; its full sequence is Imidazole glycerol phosphate synthase subunit HisF (261 aa).

Catalysis depends on residues Asp11 and Asp130.

This sequence belongs to the HisA/HisF family. As to quaternary structure, heterodimer of HisH and HisF.

It localises to the cytoplasm. It catalyses the reaction 5-[(5-phospho-1-deoxy-D-ribulos-1-ylimino)methylamino]-1-(5-phospho-beta-D-ribosyl)imidazole-4-carboxamide + L-glutamine = D-erythro-1-(imidazol-4-yl)glycerol 3-phosphate + 5-amino-1-(5-phospho-beta-D-ribosyl)imidazole-4-carboxamide + L-glutamate + H(+). The protein operates within amino-acid biosynthesis; L-histidine biosynthesis; L-histidine from 5-phospho-alpha-D-ribose 1-diphosphate: step 5/9. Its function is as follows. IGPS catalyzes the conversion of PRFAR and glutamine to IGP, AICAR and glutamate. The HisF subunit catalyzes the cyclization activity that produces IGP and AICAR from PRFAR using the ammonia provided by the HisH subunit. The polypeptide is Imidazole glycerol phosphate synthase subunit HisF (Heliobacterium modesticaldum (strain ATCC 51547 / Ice1)).